We begin with the raw amino-acid sequence, 333 residues long: Ketol-acid reductoisomerase (NADP(+)) (333 aa).

Residues 2-182 (AKIFYDSDCN…GASRAGIILT (181 aa)) form the KARI N-terminal Rossmann domain. Residues 25–28 (FGSQ), S51, S53, and 83–86 (DEKQ) contribute to the NADP(+) site. The active site involves H108. G134 provides a ligand contact to NADP(+). The KARI C-terminal knotted domain occupies 183–328 (TFKEETETDL…KELRKMMPWI (146 aa)). Mg(2+) contacts are provided by D191, E195, E227, and E231. S252 is a binding site for substrate.

The protein belongs to the ketol-acid reductoisomerase family. Mg(2+) is required as a cofactor.

It carries out the reaction (2R)-2,3-dihydroxy-3-methylbutanoate + NADP(+) = (2S)-2-acetolactate + NADPH + H(+). The enzyme catalyses (2R,3R)-2,3-dihydroxy-3-methylpentanoate + NADP(+) = (S)-2-ethyl-2-hydroxy-3-oxobutanoate + NADPH + H(+). The protein operates within amino-acid biosynthesis; L-isoleucine biosynthesis; L-isoleucine from 2-oxobutanoate: step 2/4. It functions in the pathway amino-acid biosynthesis; L-valine biosynthesis; L-valine from pyruvate: step 2/4. Involved in the biosynthesis of branched-chain amino acids (BCAA). Catalyzes an alkyl-migration followed by a ketol-acid reduction of (S)-2-acetolactate (S2AL) to yield (R)-2,3-dihydroxy-isovalerate. In the isomerase reaction, S2AL is rearranged via a Mg-dependent methyl migration to produce 3-hydroxy-3-methyl-2-ketobutyrate (HMKB). In the reductase reaction, this 2-ketoacid undergoes a metal-dependent reduction by NADPH to yield (R)-2,3-dihydroxy-isovalerate. This Caldicellulosiruptor bescii (strain ATCC BAA-1888 / DSM 6725 / KCTC 15123 / Z-1320) (Anaerocellum thermophilum) protein is Ketol-acid reductoisomerase (NADP(+)).